The primary structure comprises 442 residues: Exodeoxyribonuclease 7 large subunit (442 aa).

This sequence belongs to the XseA family. Heterooligomer composed of large and small subunits.

The protein resides in the cytoplasm. The catalysed reaction is Exonucleolytic cleavage in either 5'- to 3'- or 3'- to 5'-direction to yield nucleoside 5'-phosphates.. Bidirectionally degrades single-stranded DNA into large acid-insoluble oligonucleotides, which are then degraded further into small acid-soluble oligonucleotides. This Shewanella sediminis (strain HAW-EB3) protein is Exodeoxyribonuclease 7 large subunit.